A 387-amino-acid chain; its full sequence is Proline-rich protein 5 (387 aa).

2 interaction with RICTOR regions span residues 10-96 and 189-219; these read MSSP…LTKG and HESRGVTEDYLRLETLIQKVVSPYLGTYGLY. Positions 11–33 are disordered; that stretch reads SSPSLSDLGKREPGAAGADERGT. Over residues 18 to 33 the composition is skewed to basic and acidic residues; the sequence is LGKREPGAAGADERGT. The residue at position 253 (S253) is a Phosphoserine. Disordered stretches follow at residues 262–347 and 365–387; these read NPVA…PETL and DFGRGSRSSVSDFEAAGGRPSVV. Residues 310–321 are compositionally biased toward low complexity; the sequence is SSPSPHSGPCPS. S373 carries the phosphoserine modification.

This sequence belongs to the PROTOR family. In terms of assembly, associated component of the mechanistic target of rapamycin complex 2 (mTORC2). Binds directly to MTOR and RICTOR within the TORC2 complex.

Functionally, associated subunit of mTORC2, which regulates cell growth and survival in response to hormonal signals. mTORC2 is activated by growth factors, but, in contrast to mTORC1, seems to be nutrient-insensitive. mTORC2 seems to function upstream of Rho GTPases to regulate the actin cytoskeleton, probably by activating one or more Rho-type guanine nucleotide exchange factors. PRR5 plays an important role in regulation of PDGFRB expression and in modulation of platelet-derived growth factor signaling. May act as a tumor suppressor in breast cancer. The sequence is that of Proline-rich protein 5 from Rattus norvegicus (Rat).